The sequence spans 419 residues: Synaptotagmin-1 (419 aa).

At 1 to 57 the chain is on the vesicular side; sequence MVSESHHEALAAPPVTTVATVLPSNATEPASPGEGKEDAFSKLKEKFMNELHKIPLP. N25 is a glycosylation site (N-linked (GlcNAc...) asparagine). Residues 58–80 traverse the membrane as a helical segment; it reads PWALIAIAIVAVLLVLTCCFCIC. S-palmitoyl cysteine attachment occurs at residues C75, C76, C78, C80, and C83. The Cytoplasmic portion of the chain corresponds to 81–419; that stretch reads KKCLFKKKNK…EVDAMLAVKK (339 aa). The tract at residues 108 to 139 is disordered; the sequence is KDLGKTMKDQDDDAETGLTDGEEKEEPKEEEK. Positions 117-131 are enriched in acidic residues; the sequence is QDDDAETGLTDGEEK. T126 is modified (phosphothreonine). A phospholipid binding region spans residues 133–379; the sequence is EPKEEEKLGK…AIGKVFVGYN (247 aa). The C2 1 domain occupies 139–258; that stretch reads KLGKLQYSLD…DFGHVTEEWR (120 aa). 3 residues coordinate Ca(2+): L169, D170, and D176. Position 227 is a phosphotyrosine (Y227). Ca(2+)-binding residues include D228, F229, D230, S233, K234, and D236. The residue at position 262 (S262) is a Phosphoserine. Residues 270–403 form the C2 2 domain; the sequence is KLGDICFSLR…NPRRPIAQWH (134 aa). Ca(2+) is bound by residues D301 and D307. S340 and S342 each carry phosphoserine. Positions 361, 363, and 369 each coordinate Ca(2+).

The protein belongs to the synaptotagmin family. Homotetramer. Heterodimer; heterodimerizes with SYT2 in presence of calcium. Interacts with SCAMP5. Interacts with STON2. Forms a complex with SV2B, syntaxin 1 and SNAP25. Interacts with SV2A, SV2B and SV2C. Interacts with RIMS1. Interacts with PRRT2. Interacts with DNAJC5 in a phosphorylation-dependent manner. Interacts (via N-terminus) with RAB3A. Interacts with SYT12. Interacts with calmodulin. Interacts with DNM1 (via C-terminal proline-rich domain (PRD)); this interaction facilitates vesicle fission during clathrin-mediated endocytosis (CME). Ca(2+) serves as cofactor. In terms of processing, glycosylated.

It is found in the cytoplasmic vesicle. The protein localises to the secretory vesicle membrane. It localises to the secretory vesicle. The protein resides in the synaptic vesicle membrane. Its subcellular location is the chromaffin granule membrane. It is found in the cytoplasm. Calcium sensor that participates in triggering neurotransmitter release at the synapse. May have a regulatory role in the membrane interactions during trafficking of synaptic vesicles at the active zone of the synapse. It binds acidic phospholipids with a specificity that requires the presence of both an acidic head group and a diacyl backbone. A Ca(2+)-dependent interaction between synaptotagmin and putative receptors for activated protein kinase C has also been reported. It can bind to at least three additional proteins in a Ca(2+)-independent manner; these are neurexins, syntaxin and AP2. Plays a role in dendrite formation by melanocytes. This chain is Synaptotagmin-1, found in Macaca fascicularis (Crab-eating macaque).